We begin with the raw amino-acid sequence, 466 residues long: Probable Xaa-Pro aminopeptidase pepP (466 aa).

Mn(2+) contacts are provided by D264, D275, E398, and E438.

This sequence belongs to the peptidase M24B family. Requires Mn(2+) as cofactor.

It catalyses the reaction Release of any N-terminal amino acid, including proline, that is linked to proline, even from a dipeptide or tripeptide.. Its function is as follows. Catalyzes the removal of a penultimate prolyl residue from the N-termini of peptides. The protein is Probable Xaa-Pro aminopeptidase pepP (pepP) of Aspergillus terreus (strain NIH 2624 / FGSC A1156).